Here is a 1368-residue protein sequence, read N- to C-terminus: DNA-directed RNA polymerase subunit beta (1368 aa).

It belongs to the RNA polymerase beta chain family. In terms of assembly, the RNAP catalytic core consists of 2 alpha, 1 beta, 1 beta' and 1 omega subunit. When a sigma factor is associated with the core the holoenzyme is formed, which can initiate transcription.

It carries out the reaction RNA(n) + a ribonucleoside 5'-triphosphate = RNA(n+1) + diphosphate. In terms of biological role, DNA-dependent RNA polymerase catalyzes the transcription of DNA into RNA using the four ribonucleoside triphosphates as substrates. This is DNA-directed RNA polymerase subunit beta from Legionella pneumophila subsp. pneumophila (strain Philadelphia 1 / ATCC 33152 / DSM 7513).